We begin with the raw amino-acid sequence, 111 residues long: uncharacterized protein (111 aa).

A helical transmembrane segment spans residues 60 to 80 (TFGRFLAHISCLICILSKRIF).

It localises to the mitochondrion membrane. This is an uncharacterized protein from Arabidopsis thaliana (Mouse-ear cress).